Here is a 278-residue protein sequence, read N- to C-terminus: Protein EXORDIUM-like 4 (278 aa).

Residues 1–23 (MAYNYRFAILLVLLSATVGFTAA) form the signal peptide. An N-linked (GlcNAc...) asparagine glycan is attached at Asn35.

The protein belongs to the EXORDIUM family.

Its subcellular location is the secreted. It is found in the extracellular space. The protein localises to the apoplast. Its function is as follows. May play a role in a brassinosteroid-dependent regulation of growth and development. This chain is Protein EXORDIUM-like 4 (EXL4), found in Arabidopsis thaliana (Mouse-ear cress).